Reading from the N-terminus, the 421-residue chain is 2-deoxystreptamine N-acetyl-D-glucosaminyltransferase (421 aa).

The protein belongs to the glycosyltransferase group 1 family. Glycosyltransferase 4 subfamily.

It catalyses the reaction 2-deoxystreptamine + UDP-N-acetyl-alpha-D-glucosamine = 2'-N-acetylparomamine + UDP + H(+). The protein operates within antibiotic biosynthesis; neomycin biosynthesis. In terms of biological role, glycosyltransferase involved in the biosynthesis of neomycin by mediating conversion of 2-deoxystreptamine (2-DOS) to 2'-N-acetylparomamine using UDP-alpha-D-glucosamine as sugar donor. This Streptomyces fradiae (Streptomyces roseoflavus) protein is 2-deoxystreptamine N-acetyl-D-glucosaminyltransferase (neoD).